A 77-amino-acid polypeptide reads, in one-letter code: Small ribosomal subunit protein bS18 (77 aa).

Belongs to the bacterial ribosomal protein bS18 family. As to quaternary structure, part of the 30S ribosomal subunit. Forms a tight heterodimer with protein bS6.

Functionally, binds as a heterodimer with protein bS6 to the central domain of the 16S rRNA, where it helps stabilize the platform of the 30S subunit. The sequence is that of Small ribosomal subunit protein bS18 from Desulforamulus reducens (strain ATCC BAA-1160 / DSM 100696 / MI-1) (Desulfotomaculum reducens).